A 289-amino-acid polypeptide reads, in one-letter code: Probable 2-keto-3-deoxyxylonate dehydratase (289 aa).

Mg(2+)-binding residues include Glu-144, Glu-146, and Asp-164.

The protein belongs to the FAH family.

The catalysed reaction is 2-dehydro-3-deoxy-D-arabinonate = 2,5-dioxopentanoate + H2O. It functions in the pathway carbohydrate metabolism; D-xylose degradation. Its function is as follows. Probable 2-keto-3-deoxyxylonate dehydratase involved in the degradation of D-xylose, a major component of hemicelluloses such as xylan. Catalyzes the fourth reaction in the xylose utilization pathway through dehydratation of 2-dehydro-3-deoxy-D-xylonate into alpha-ketoglutarate semialdehyde (2,5-dioxopentanoate). This is Probable 2-keto-3-deoxyxylonate dehydratase from Haloferax volcanii (strain ATCC 29605 / DSM 3757 / JCM 8879 / NBRC 14742 / NCIMB 2012 / VKM B-1768 / DS2) (Halobacterium volcanii).